Here is a 352-residue protein sequence, read N- to C-terminus: Mitochondrial adenine nucleotide transporter ADNT1 (352 aa).

Solcar repeat units follow at residues 36-123 (KSIC…ASNG), 139-227 (LTPL…LKDW), and 242-343 (LTVV…VKDV). 6 helical membrane-spanning segments follow: residues 41 to 61 (SLFAGGVAGGVSRTAVAPLER), 100 to 120 (GTNCARIVPNSAVKFFSYEQA), 145 to 162 (LGAGATAGIIAMSATYPM), 202 to 221 (GWLPSVIGVVPYVGLNFSVY), 242 to 263 (LTVVTRLTCGAIAGTVGQTIAY), and 324 to 340 (VKVVPSIAIAFVTYEMV).

The protein belongs to the mitochondrial carrier (TC 2.A.29) family. Expressed in seedling radicles and roots, vasculature of cotyledons, leaf primordia, leaves and sepals.

The protein resides in the mitochondrion inner membrane. Its activity is regulated as follows. Inhibited by pyridoxal 5-phosphate, bathophenanthroline, mersalyl, p-hydroxymercuribenzoate and tannic acid. Functionally, mitochondrial adenylate carrier that catalyzes specifically the transport of ATP, ADP and AMP by a counter-exchange mechanism across the inner mitochondrial membrane. Substrate preference in reconstituted proteoliposomes is ATP &gt; AMP &gt; ADP. May play a role in oxidative phosphorylation and be important for the provision of energy required to support growth in heterotrophic tissues. The protein is Mitochondrial adenine nucleotide transporter ADNT1 (ADNT1) of Arabidopsis thaliana (Mouse-ear cress).